The sequence spans 278 residues: MVYNPTATFHKKTLTRMKTGLGSNGDILFIQTRALRDQLSSSFRFVYSNGPFFSDPGPGVLPVYKDAGPFRSWLRRPLQNRAQEPRLHMEAIRKCLEGTMKEDEQSGASGQWVGLMGFSQGARLAASVLFESQRRQNIQEKGGIVRGYEGDNIETKLWDQRWQFAVLFSGPAPLIAFCPENDHLSSQSTAEHDPMYRALDNVNCSGELHITKPTLHVIGVKDEWAPSQRELYEKYCSKESSTLVEWEGAHRIPIESSIVKDLCARILVMSKQADFVES.

Active-site charge relay system residues include serine 119, aspartate 222, and histidine 250.

It belongs to the LovG family.

The protein operates within mycotoxin biosynthesis. Its function is as follows. Probable esterase; part of the Tox1A locus, one of the 2 loci that mediate the biosynthesis of T-toxin, a family of linear polyketides 37 to 45 carbons in length, of which the major component is 41 carbons, and which leads to high virulence to maize. One of the PKSs (PKS1 or PKS2) could synthesize a precursor, used subsequently by the other PKS as starter unit, to add additional carbons. Variability in the length of the final carbon backbone C35-47 could be achieved by varying the number of condensation cycles, or use of different starter or extender units or might be due to decarboxylation of the penultimate product, catalyzed by DEC1. Additional proteins are required for the biosynthesis of T-toxin, including oxidoreductases RED1, RED2, RED3, LAM1 and OXI1, as well as esterase TOX9. This chain is Probable esterase TOX9, found in Cochliobolus heterostrophus (strain C4 / ATCC 48331 / race T) (Southern corn leaf blight fungus).